The primary structure comprises 303 residues: ATP synthase gamma chain (303 aa).

It belongs to the ATPase gamma chain family. F-type ATPases have 2 components, CF(1) - the catalytic core - and CF(0) - the membrane proton channel. CF(1) has five subunits: alpha(3), beta(3), gamma(1), delta(1), epsilon(1). CF(0) has three main subunits: a, b and c.

It localises to the cell inner membrane. In terms of biological role, produces ATP from ADP in the presence of a proton gradient across the membrane. The gamma chain is believed to be important in regulating ATPase activity and the flow of protons through the CF(0) complex. This Elusimicrobium minutum (strain Pei191) protein is ATP synthase gamma chain.